A 161-amino-acid chain; its full sequence is MGCCYSSENEDSDQDREERKLLLDPSSPPTKALNGAEPNYHSLPSARTDEQALLSSILAKTASNIIDVSAADSQGMEQHEYMDRARQYSTRLAVLSSSLTHWKKLPPLPSLTSQPHQVLASEPIPFSDLQQVSRIAAYAYSALSQIRVDAKEELVVQFGIP.

Residues 1-43 (MGCCYSSENEDSDQDREERKLLLDPSSPPTKALNGAEPNYHSL) are disordered. Gly-2 carries the N-myristoyl glycine lipid modification. Residues Cys-3 and Cys-4 are each lipidated (S-palmitoyl cysteine). A Glycyl lysine isopeptide (Lys-Gly) (interchain with G-Cter in ubiquitin) cross-link involves residue Lys-20. Phosphoserine is present on Ser-27. A Glycyl lysine isopeptide (Lys-Gly) (interchain with G-Cter in ubiquitin) cross-link involves residue Lys-31. 2 positions are modified to phosphoserine: Ser-42 and Ser-56. Residue Lys-60 forms a Glycyl lysine isopeptide (Lys-Gly) (interchain with G-Cter in ubiquitin) linkage. Residue Ser-98 is modified to Phosphoserine. Residues Lys-103 and Lys-104 each participate in a glycyl lysine isopeptide (Lys-Gly) (interchain with G-Cter in ubiquitin) cross-link. The tract at residues 121 to 161 (SEPIPFSDLQQVSRIAAYAYSALSQIRVDAKEELVVQFGIP) is interaction with LAMTOR2 and LAMTOR3. At Ser-141 the chain carries Phosphoserine.

Belongs to the LAMTOR1 family. As to quaternary structure, part of the Ragulator complex composed of LAMTOR1, LAMTOR2, LAMTOR3, LAMTOR4 and LAMTOR5. LAMTOR4 and LAMTOR5 form a heterodimer that interacts, through LAMTOR1, with a LAMTOR2, LAMTOR3 heterodimer. Interacts with LAMTOR2 and LAMTOR3; the interaction is direct. The Ragulator complex interacts with both the mTORC1 complex and heterodimers constituted of the Rag GTPases RagA/RRAGA, RagB/RRAGB, RagC/RRAGC and RagD/RRAGD; regulated by amino acid availability. The Ragulator complex interacts with SLC38A9; the probable amino acid sensor. Component of the lysosomal folliculin complex (LFC), composed of FLCN, FNIP1 (or FNIP2), RagA/RRAGA or RagB/RRAGB GDP-bound, RagC/RRAGC or RagD/RRAGD GTP-bound, and Ragulator. Associates with the lysosomal V-ATPase complex; interaction promotes the guanine nucleotide exchange factor (GEF) of the Ragulator complex. Interacts with MMP14. Interacts with CDKN1B; prevents the interaction of CDKN1B with RHOA leaving RHOA in a form accessible to activation by ARHGEF2. Interacts with PIP4P1. Post-translationally, N-terminal myristoylation and palmitoylation mediates its recruitment to lysosome membranes, thereby promoting localization of the Ragulator complex to lysosomes. N-myristoylation by NMT1 is required for palmitoylation at Cys-3 and Cys-4. May be palmitoylated by ZDHHC3. In terms of processing, ubiquitinated at Lys-60, Lys-103 and Lys-104 by UBE3A, promoting its degradation by the proteasome. Ubiquitination at Lys-20 impairs the association with the lysosomal V-ATPase complex. Deubiquitination at Lys-20 by USP32 promotes the association with the lysosomal V-ATPase complex and subsequent activation of the mTORC1 complex.

It localises to the lysosome membrane. It is found in the late endosome membrane. Its function is as follows. Key component of the Ragulator complex, a multiprotein complex involved in amino acid sensing and activation of mTORC1, a signaling complex promoting cell growth in response to growth factors, energy levels, and amino acids. Activated by amino acids through a mechanism involving the lysosomal V-ATPase, the Ragulator plays a dual role for the small GTPases Rag (RagA/RRAGA, RagB/RRAGB, RagC/RRAGC and/or RagD/RRAGD): it (1) acts as a guanine nucleotide exchange factor (GEF), activating the small GTPases Rag and (2) mediates recruitment of Rag GTPases to the lysosome membrane. Activated Ragulator and Rag GTPases function as a scaffold recruiting mTORC1 to lysosomes where it is in turn activated. LAMTOR1 is directly responsible for anchoring the Ragulator complex to the lysosomal membrane. LAMTOR1 wraps around the other subunits of the Ragulator complex to hold them in place and interacts with the Rag GTPases, thereby playing a key role in the recruitment of the mTORC1 complex to lysosomes. Also involved in the control of embryonic stem cells differentiation via non-canonical RagC/RRAGC and RagD/RRAGD activation: together with FLCN, it is necessary to recruit and activate RagC/RRAGC and RagD/RRAGD at the lysosomes, and to induce exit of embryonic stem cells from pluripotency via non-canonical, mTOR-independent TFE3 inactivation. Also required for late endosomes/lysosomes biogenesis it may regulate both the recycling of receptors through endosomes and the MAPK signaling pathway through recruitment of some of its components to late endosomes. May be involved in cholesterol homeostasis regulating LDL uptake and cholesterol release from late endosomes/lysosomes. May also play a role in RHOA activation. This chain is Ragulator complex protein LAMTOR1, found in Homo sapiens (Human).